Here is a 136-residue protein sequence, read N- to C-terminus: ATP synthase epsilon chain (136 aa).

A disordered region spans residues 112-136; that stretch reads GNSADKLKAKESLNKARARSQAVGE. Basic and acidic residues predominate over residues 116 to 125; it reads DKLKAKESLN.

The protein belongs to the ATPase epsilon chain family. In terms of assembly, F-type ATPases have 2 components, CF(1) - the catalytic core - and CF(0) - the membrane proton channel. CF(1) has five subunits: alpha(3), beta(3), gamma(1), delta(1), epsilon(1). CF(0) has three main subunits: a, b and c.

Its subcellular location is the cellular thylakoid membrane. Its function is as follows. Produces ATP from ADP in the presence of a proton gradient across the membrane. The polypeptide is ATP synthase epsilon chain (Prochlorococcus marinus (strain SARG / CCMP1375 / SS120)).